Here is a 55-residue protein sequence, read N- to C-terminus: Large ribosomal subunit protein bL32 (55 aa).

The segment covering 1-19 (MAVPKRRMSRANTHTRRSQ) has biased composition (basic residues). The tract at residues 1–21 (MAVPKRRMSRANTHTRRSQWK) is disordered.

The protein belongs to the bacterial ribosomal protein bL32 family.

In Corynebacterium kroppenstedtii (strain DSM 44385 / JCM 11950 / CIP 105744 / CCUG 35717), this protein is Large ribosomal subunit protein bL32.